We begin with the raw amino-acid sequence, 202 residues long: HTH-type transcriptional regulator BetI (202 aa).

An HTH tetR-type domain is found at 8 to 68 (PIRRRQLIDA…ATMRDITRQL (61 aa)). The segment at residues 31 to 50 (TIAQIARRAGVSAGIISHYF) is a DNA-binding region (H-T-H motif).

Its pathway is amine and polyamine biosynthesis; betaine biosynthesis via choline pathway [regulation]. Repressor involved in the biosynthesis of the osmoprotectant glycine betaine. It represses transcription of the choline transporter BetT and the genes of BetAB involved in the synthesis of glycine betaine. In Cronobacter sakazakii (strain ATCC BAA-894) (Enterobacter sakazakii), this protein is HTH-type transcriptional regulator BetI.